Reading from the N-terminus, the 927-residue chain is Lysine-specific demethylase JMJ28 (927 aa).

Positions 7–52 (VPDEFRCNRSDGKQWRCKRRALEGKKMCESHHSQQSLKRSKQKVAE) constitute a WRC domain. The Nuclear localization signal 1 motif lies at 30–37 (GKKMCESH). Residues 30 to 92 (GKKMCESHHS…RLGKSKRKRV (63 aa)) are disordered. The span at 80-91 (RSKRLGKSKRKR) shows a compositional bias: basic residues. Positions 127–134 (EKRKRLPN) match the Nuclear localization signal 2 motif. Positions 227, 230, 241, 244, 250, 253, 269, and 272 each coordinate Zn(2+). The segment at 227–273 (CHWCGTRGFGDLISCLSCEREFFCIDCIEKRNKGSKEEVEKKCPVCR) adopts an RING-type; degenerate zinc-finger fold. Residues 330–339 (ENDAEKKEGN) are compositionally biased toward basic and acidic residues. Disordered stretches follow at residues 330 to 359 (ENDA…QPCS) and 701 to 736 (RSKN…SQHC). The JmjC domain occupies 601 to 881 (FPNHYAEILN…ESIKRVKELN (281 aa)).

It belongs to the JARID1 histone demethylase family. As to quaternary structure, interacts with the FBH transcription factors FBH1, FBH2, FBH3 and FBH4. Fe(2+) is required as a cofactor. As to expression, expressed in inflorescences, flowers, roots, siliques, leaves and stems, especially in the vasculature (mainly phloem), with highest levels in floral organs. Present at high levels in flowers, shoot apex and young seeds, but observed at low levels in dry seeds, root apex and anthers.

It is found in the nucleus. In terms of biological role, may function as histone H3 lysine demethylase and be involved in regulation of gene expression. Regulates flowering time by promoting CONSTANS (CO) and CONSTANS-LIKE genes (e.g. COL2 and COL5) expression via interaction with FBH transcription factors (FBH1, FBH2, FBH3 and FBH4) at their loci to remove H3K9me2 repressive histone marks. Also modulates the expression of several developmental genes such as MYB30, TFS1, AGL6 and RVE2. In Arabidopsis thaliana (Mouse-ear cress), this protein is Lysine-specific demethylase JMJ28.